Reading from the N-terminus, the 504-residue chain is Aspartyl/glutamyl-tRNA(Asn/Gln) amidotransferase subunit B (504 aa).

The protein belongs to the GatB/GatE family. GatB subfamily. In terms of assembly, heterotrimer of A, B and C subunits.

The enzyme catalyses L-glutamyl-tRNA(Gln) + L-glutamine + ATP + H2O = L-glutaminyl-tRNA(Gln) + L-glutamate + ADP + phosphate + H(+). It carries out the reaction L-aspartyl-tRNA(Asn) + L-glutamine + ATP + H2O = L-asparaginyl-tRNA(Asn) + L-glutamate + ADP + phosphate + 2 H(+). Allows the formation of correctly charged Asn-tRNA(Asn) or Gln-tRNA(Gln) through the transamidation of misacylated Asp-tRNA(Asn) or Glu-tRNA(Gln) in organisms which lack either or both of asparaginyl-tRNA or glutaminyl-tRNA synthetases. The reaction takes place in the presence of glutamine and ATP through an activated phospho-Asp-tRNA(Asn) or phospho-Glu-tRNA(Gln). This Rhodococcus opacus (strain B4) protein is Aspartyl/glutamyl-tRNA(Asn/Gln) amidotransferase subunit B.